The sequence spans 347 residues: Phosphoribosylformylglycinamidine cyclo-ligase (347 aa).

The protein belongs to the AIR synthase family.

It is found in the cytoplasm. It catalyses the reaction 2-formamido-N(1)-(5-O-phospho-beta-D-ribosyl)acetamidine + ATP = 5-amino-1-(5-phospho-beta-D-ribosyl)imidazole + ADP + phosphate + H(+). It participates in purine metabolism; IMP biosynthesis via de novo pathway; 5-amino-1-(5-phospho-D-ribosyl)imidazole from N(2)-formyl-N(1)-(5-phospho-D-ribosyl)glycinamide: step 2/2. The chain is Phosphoribosylformylglycinamidine cyclo-ligase from Yersinia pseudotuberculosis serotype IB (strain PB1/+).